Here is a 1217-residue protein sequence, read N- to C-terminus: Valine--tRNA ligase (1217 aa).

Residues 27-155 enclose the GST C-terminal domain; that stretch reads NAKQQSQVWQ…ISLCEKMVPV (129 aa). A 'HIGH' region motif is present at residues 293-303; the sequence is PNVTGSLHLGH. The 'KMSKS' region motif lies at 809 to 813; sequence KMSKS. Lys812 provides a ligand contact to ATP.

The protein belongs to the class-I aminoacyl-tRNA synthetase family.

It carries out the reaction tRNA(Val) + L-valine + ATP = L-valyl-tRNA(Val) + AMP + diphosphate. The chain is Valine--tRNA ligase (vars1) from Takifugu rubripes (Japanese pufferfish).